The following is a 619-amino-acid chain: Probable pectinesterase/pectinesterase inhibitor 25 (619 aa).

Positions 1 to 23 are cleaved as a signal peptide; sequence MKMQTLNFTSSLLFLSFIFLSCA. Residues 31-84 form a disordered region; the sequence is SPSQPHSEPPSQLPFEPPVESPFFPPSQPPIFVPPSQPPSLPPSQSQSPSLACK. Over residues 37-72 the composition is skewed to pro residues; the sequence is SEPPSQLPFEPPVESPFFPPSQPPIFVPPSQPPSLP. Positions 73–231 are pectinesterase inhibitor 25; sequence PSQSQSPSLA…TRLYSISLGL (159 aa). Residues Asn220, Asn255, Asn312, Asn325, and Asn364 are each glycosylated (N-linked (GlcNAc...) asparagine). Positions 302–601 are pectinesterase 25; that stretch reads AVIVGPFKSD…FTVYNFTMGD (300 aa). Thr380 provides a ligand contact to substrate. Asn382 carries N-linked (GlcNAc...) asparagine glycosylation. Position 410 (Gln410) interacts with substrate. Residue Asp433 is the Proton donor; for pectinesterase activity of the active site. The cysteines at positions 447 and 467 are disulfide-linked. Asp454 (nucleophile; for pectinesterase activity) is an active-site residue. Asn500 is a glycosylation site (N-linked (GlcNAc...) asparagine). Residues Arg522 and Trp524 each contribute to the substrate site. N-linked (GlcNAc...) asparagine glycosylation is found at Asn550, Asn591, and Asn596.

In the N-terminal section; belongs to the PMEI family. This sequence in the C-terminal section; belongs to the pectinesterase family. Expressed in siliques.

It localises to the secreted. The protein resides in the cell wall. It carries out the reaction [(1-&gt;4)-alpha-D-galacturonosyl methyl ester](n) + n H2O = [(1-&gt;4)-alpha-D-galacturonosyl](n) + n methanol + n H(+). It participates in glycan metabolism; pectin degradation; 2-dehydro-3-deoxy-D-gluconate from pectin: step 1/5. Functionally, acts in the modification of cell walls via demethylesterification of cell wall pectin. This chain is Probable pectinesterase/pectinesterase inhibitor 25 (PME25), found in Arabidopsis thaliana (Mouse-ear cress).